A 71-amino-acid chain; its full sequence is Glucose-repressible gene protein (71 aa).

Residues 19–71 form a disordered region; that stretch reads TATASKEANKDVAKDSNQGVGTRLNAAGDAISDKVSENKHDAKAEAHKQGATH. Residues 49–71 are compositionally biased toward basic and acidic residues; it reads ISDKVSENKHDAKAEAHKQGATH.

The protein is Glucose-repressible gene protein (grg-1) of Neurospora crassa (strain ATCC 24698 / 74-OR23-1A / CBS 708.71 / DSM 1257 / FGSC 987).